A 325-amino-acid chain; its full sequence is Chain length determinant protein (325 aa).

Residues 1-31 (MRVENNNVSGQNHDPEQIDLIDLLVQLWRGK) lie on the Cytoplasmic side of the membrane. The helical transmembrane segment at 32 to 52 (MTIIISVIVAIALAIGYLAVA) threads the bilayer. At 53 to 294 (KEKWTSTAIV…LPIRRDSPKK (242 aa)) the chain is on the periplasmic side. Residues 295 to 315 (AITLILAVLLGGMVGAGIVLG) traverse the membrane as a helical segment. At 316–325 (RNALRNYNAK) the chain is on the cytoplasmic side.

It belongs to the WzzB/Cld/Rol family.

It is found in the cell inner membrane. It functions in the pathway bacterial outer membrane biogenesis; lipopolysaccharide biosynthesis. Confers a modal distribution of chain length on the O-antigen component of lipopolysaccharide (LPS). Gives rise to a reduced number of short chain molecules and increases in numbers of longer molecules. The protein is Chain length determinant protein (wzzB) of Shigella dysenteriae.